The following is a 257-amino-acid chain: Zinc transporter ZupT (257 aa).

8 consecutive transmembrane segments (helical) span residues 5-25 (LILT…GVLG), 32-52 (VLAF…LMEM), 61-81 (GMSP…YFGL), 109-129 (AILL…ATFV), 137-157 (LGFG…LAVA), 171-191 (IFWA…AWLI), 195-215 (LVSP…MVAL), and 236-256 (GVLC…TIGI). The Fe(2+) site is built by Asn120 and Glu123. Zn(2+) contacts are provided by Glu123 and His148. Asn149, Glu152, and Glu181 together coordinate Fe(2+). Residue Glu152 participates in Zn(2+) binding.

It belongs to the ZIP transporter (TC 2.A.5) family. ZupT subfamily.

Its subcellular location is the cell inner membrane. It catalyses the reaction Zn(2+)(in) = Zn(2+)(out). Its function is as follows. Mediates zinc uptake. May also transport other divalent cations. This chain is Zinc transporter ZupT, found in Salmonella heidelberg (strain SL476).